A 213-amino-acid polypeptide reads, in one-letter code: Putative transmembrane protein DDB_G0267860 (213 aa).

Residues 1 to 22 (MKTKILLLNFIIIFFLINVNLA) form the signal peptide. The Extracellular portion of the chain corresponds to 23–191 (IKKDSPFKEI…SSKFDSSTSS (169 aa)). N-linked (GlcNAc...) asparagine glycosylation is found at N92 and N114. The helical transmembrane segment at 192–212 (ISINTLAILSLLFLIFINKLI) threads the bilayer. A topological domain (cytoplasmic) is located at residue N213.

The protein localises to the membrane. This is Putative transmembrane protein DDB_G0267860 from Dictyostelium discoideum (Social amoeba).